Reading from the N-terminus, the 48-residue chain is Small ribosomal subunit protein uS14 (48 aa).

Zn(2+)-binding residues include cysteine 13, cysteine 16, cysteine 31, and cysteine 34.

Belongs to the universal ribosomal protein uS14 family. Zinc-binding uS14 subfamily. As to quaternary structure, part of the 30S ribosomal subunit. Requires Zn(2+) as cofactor.

Binds 16S rRNA, required for the assembly of 30S particles. The sequence is that of Small ribosomal subunit protein uS14 from Methanopyrus kandleri (strain AV19 / DSM 6324 / JCM 9639 / NBRC 100938).